A 332-amino-acid chain; its full sequence is Adenosine receptor A2b (332 aa).

Residues 1–8 (MPLEAQDA) are Extracellular-facing. A helical membrane pass occupies residues 9–33 (VYVALELALAALSVTGNVLVCAAVG). Topologically, residues 34-43 (TSSALQTPTN) are cytoplasmic. A helical membrane pass occupies residues 44–67 (YFLVSLAAADVAVGLFAIPFAVTI). Residues 68 to 78 (SLGFCTDFHSC) lie on the Extracellular side of the membrane. Cys-78 and Cys-170 are joined by a disulfide. Residues 79-101 (LFLACFVLVLTQSSIFSLLAVAV) traverse the membrane as a helical segment. Over 102–121 (DRYLAVRVPLRYKSLVTGAR) the chain is Cytoplasmic. The chain crosses the membrane as a helical span at residues 122 to 144 (ARGVIAALWVLAFGIGLTPFLGW). The Extracellular portion of the chain corresponds to 145–177 (NDRKIATNCTEPGDAATNVSCCLIRCLFENVVP). N-linked (GlcNAc...) asparagine glycans are attached at residues Asn-152 and Asn-162. Glu-173 serves as a coordination point for adenosine. Residues 178–202 (MSYMVYFNFFGCVLPPLLIMLVIYV) traverse the membrane as a helical segment. The Cytoplasmic portion of the chain corresponds to 203-234 (KIFLVACRQLQRTELMDHSRTVLQREIHAAKS). Residues 235-258 (LALIVGIFALCWLPVHTINCASLF) traverse the membrane as a helical segment. Residue Asn-253 coordinates adenosine. Residues 259 to 266 (QPTWAKVK) are Extracellular-facing. The chain crosses the membrane as a helical span at residues 267-290 (PKWAINTAILLSHANSAVNPIVYA). Ser-278 and His-279 together coordinate adenosine. At 291 to 332 (YRNRDFRYTFHKIISRYILCRTHILKSGEGQVGSQPTLQLGL) the chain is on the cytoplasmic side. Cys-310 is lipidated: S-palmitoyl cysteine.

It belongs to the G-protein coupled receptor 1 family.

The protein resides in the cell membrane. Receptor for adenosine. The activity of this receptor is mediated by G proteins which activate adenylyl cyclase. The chain is Adenosine receptor A2b (ADORA2B) from Bos taurus (Bovine).